Consider the following 37-residue polypeptide: uncharacterized protein (37 aa).

The segment at M1–F37 is disordered. A compositionally biased stretch (basic residues) spans R23–F37.

This is an uncharacterized protein from Bacillus phage phi105 (Bacteriophage phi-105).